The chain runs to 189 residues: Chitin synthase 2 (189 aa).

Belongs to the chitin synthase family. Class II subfamily.

It localises to the cell membrane. It carries out the reaction [(1-&gt;4)-N-acetyl-beta-D-glucosaminyl](n) + UDP-N-acetyl-alpha-D-glucosamine = [(1-&gt;4)-N-acetyl-beta-D-glucosaminyl](n+1) + UDP + H(+). Polymerizes chitin, a structural polymer of the cell wall and septum, by transferring the sugar moiety of UDP-GlcNAc to the non-reducing end of the growing chitin polymer. In Aspergillus niger, this protein is Chitin synthase 2 (chs2).